A 1469-amino-acid chain; its full sequence is snRNA-activating protein complex subunit 4 (1469 aa).

The interval 16–82 (ELERILDPGS…DPKDKTLPED (67 aa)) is disordered. The span at 24 to 36 (GSSGSHVEISESS) shows a compositional bias: low complexity. Acidic residues predominate over residues 37–53 (LESDSEADSLPSEDLDP). The residue at position 68 (S68) is a Phosphoserine. Residues 84 to 133 (ETCLQLNMVYQEVIQEKLAEANLLLAQNREQQEELMRDLAGSKGTKVKDG) are SNAPC5-binding. The Myb-like 1 domain maps to 250 to 288 (EEALLGNRLDSHDWEKISNINFEGSRSAEEIRKFWQNSE). In terms of domain architecture, HTH myb-type 1 spans 289–343 (HPSINKQEWSREEEERLQAIAAAHGHLEWQKIAEELGTSRSAFQCLQKFQQHNKA). The segment at residues 317–341 (WQKIAEELGTSRSAFQCLQKFQQHN) is a DNA-binding region (H-T-H motif). The Myb-like 2 domain maps to 344–395 (LKRKEWTEEEDRMLTQLVQEMRVGSHIPYRRIVYYMEGRDSMQLIYRWTKSL). 2 consecutive HTH myb-type domains span residues 396 to 451 (DPGL…HFSL) and 452 to 503 (KKGR…GKKQ). DNA-binding regions (H-T-H motif) lie at residues 424 to 447 (WFKI…LRRL) and 476 to 499 (WAKI…KIMM). Disordered regions lie at residues 501–558 (KKQG…GDRA), 577–661 (QSTS…QALE), 685–710 (RSCT…SGDS), 834–894 (ASSS…KTVS), 932–981 (PLPH…DKRL), 1001–1051 (PAAS…PSPT), 1121–1167 (AAQG…PAEA), and 1184–1266 (IPEP…GPEK). The segment covering 503 to 516 (QGLRRRRRRARHSV) has biased composition (basic residues). A compositionally biased stretch (low complexity) spans 519–541 (SSTSSSGSSSGSSGGSSSSSSSS). At S599 the chain carries Phosphoserine. Positions 602 to 618 (KGSSASQGGSKEASTTA) are enriched in polar residues. S626 bears the Phosphoserine mark. Over residues 932 to 944 (PLPHTPHGRPAPG) the composition is skewed to pro residues. The span at 951–968 (PLSGPGAPAAAKPGTSGS) shows a compositional bias: low complexity. Polar residues predominate over residues 1014 to 1029 (ISVSCPESGLGQSQAP). Positions 1039–1051 (EAPPFLPAAPSPT) are enriched in pro residues. Position 1157 is a phosphothreonine (T1157). Over residues 1184 to 1195 (IPEPRTSSHADP) the composition is skewed to basic and acidic residues. The residue at position 1224 (S1224) is a Phosphoserine. The interval 1281–1393 (ATQQWLGGQR…QGVRTTLSVP (113 aa)) is SNAPC2-binding. S1398, S1400, and S1440 each carry phosphoserine. The segment at 1430–1449 (APDSGKCSASSCLDTSNDPD) is disordered. The segment covering 1436 to 1445 (CSASSCLDTS) has biased composition (polar residues).

In terms of assembly, part of the SNAPc complex composed of 5 subunits: SNAPC1, SNAPC2, SNAPC3, SNAPC4 and SNAPC5. SNAPC4 interacts with SNAPC1, SNAPC2, SNAPC5, BRF2 and TBP.

The protein resides in the nucleus. Its function is as follows. Part of the SNAPc complex required for the transcription of both RNA polymerase II and III small-nuclear RNA genes. Binds to the proximal sequence element (PSE), a non-TATA-box basal promoter element common to these 2 types of genes. Recruits TBP and BRF2 to the U6 snRNA TATA box. In Homo sapiens (Human), this protein is snRNA-activating protein complex subunit 4.